We begin with the raw amino-acid sequence, 2237 residues long: Zinc finger protein 318 (2237 aa).

2 stretches are compositionally biased toward low complexity: residues 1-12 (MYRSGSRSSVSS) and 30-39 (GASSGPTRRP). Positions 1 to 221 (MYRSGSRSSV…DMDRDDLTDD (221 aa)) are disordered. The interval 1–1114 (MYRSGSRSSV…THMHNKKHTQ (1114 aa)) is interaction with AR. Residue S40 is modified to Phosphoserine. Over residues 53 to 66 (PARRHRSPSGHRGR) the composition is skewed to basic residues. Phosphoserine occurs at positions 69, 109, and 111. Basic and acidic residues predominate over residues 140-156 (IRGESRADFARDGRGDH). Phosphoserine occurs at positions 167 and 205. Y237 carries the post-translational modification Phosphotyrosine. Phosphoserine is present on residues S239 and S246. Positions 263–350 (LHRPEFSPQS…SPRFLDPEFR (88 aa)) are disordered. Basic and acidic residues-rich tracts occupy residues 274–290 (CHDELLRGTERNRDKLK) and 297–317 (RSEERSREAKRPRYDDTEKVH). The segment covering 321 to 332 (GDHSSFTSGTRN) has biased composition (polar residues). A coiled-coil region spans residues 348–376 (EFRELDLARRKREEEEEQSRSLSQELVGV). Phosphoserine is present on residues S497, S502, S531, and S557. 2 disordered regions span residues 551–612 (QEKR…ESLE) and 645–732 (QERL…TKNS). Over residues 560-576 (DIEDEEKFLYGDEEEDI) the composition is skewed to acidic residues. Residues K577, K583, K596, and K607 each participate in a glycyl lysine isopeptide (Lys-Gly) (interchain with G-Cter in SUMO2) cross-link. Positions 577–586 (KSESPLKSLE) are enriched in basic and acidic residues. Residues 592–602 (GTRQKANSLPS) show a composition bias toward polar residues. Composition is skewed to basic and acidic residues over residues 658-677 (SADRRLSADRHLSGDRHFSA) and 692-706 (RSSDPHRPESRETHH). Residue T865 is modified to Phosphothreonine. Residues 904–1003 (EKNRASQKQK…SELDKVAQIL (100 aa)) adopt a coiled-coil conformation. 3 stretches are compositionally biased toward basic and acidic residues: residues 945–964 (QQGEMLRKKRREKDGHKDPL), 1013–1037 (KSSNDSKESTEKPEKEKSKSPEKEL), and 1047–1056 (KESKMNEKSC). Disordered regions lie at residues 945-966 (QQGEMLRKKRREKDGHKDPLLM) and 1013-1072 (KSSN…TVKQ). Phosphoserine is present on S1032. Over residues 1058–1072 (KSPSSTESLQPTVKQ) the composition is skewed to polar residues. At S1059 the chain carries Phosphoserine. 2 consecutive Matrin-type zinc fingers follow at residues 1085-1119 (AGSHWCKDCNTTCGTMFDFFTHMHNKKHTQTLDPY) and 1158-1180 (FYCQLCEEFLGDPISGEQHVKGH). 3 disordered regions span residues 1245 to 1289 (VKED…KKEP), 1302 to 1342 (SWKK…VGKA), and 1366 to 1395 (TTSTQTKIRPNLPIPSTVLRKSGSATVSKP). Composition is skewed to basic and acidic residues over residues 1280–1289 (QVKEEVKKEP), 1304–1313 (KKPEKEEEKG), and 1321–1341 (PKEDTVETSKDRDDGKAEVGK). S1445 bears the Phosphoserine mark. 4 disordered regions span residues 1449 to 1497 (KVEL…LSAP), 1614 to 1651 (HETKLSSSTLANGESSSLPRTESSDFSSTCTLNSSMSS), 1727 to 1770 (TSGS…HCQT), and 1790 to 1867 (EVYQ…MTGH). A compositionally biased stretch (pro residues) spans 1469-1490 (LPPPPPPPPPPPPPPPPPPPQA). Residues 1618 to 1639 (LSSSTLANGESSSLPRTESSDF) are compositionally biased toward polar residues. A compositionally biased stretch (low complexity) spans 1640–1651 (SSTCTLNSSMSS). The span at 1734 to 1749 (DTHKDRPPEGKIRFDL) shows a compositional bias: basic and acidic residues. Residues 1757–1770 (TDSTSHLSDTHCQT) are compositionally biased toward polar residues. A compositionally biased stretch (basic and acidic residues) spans 1796-1814 (GCRESEMKRKTELKGKVAT). Residues 1798–1827 (RESEMKRKTELKGKVATEEEEEEEEEGANS) are a coiled coil. Residues 1815–1824 (EEEEEEEEEG) are compositionally biased toward acidic residues. Over residues 1828–1840 (IEDSNSNHGNRNT) the composition is skewed to polar residues. Phosphoserine is present on residues S1878, S1908, S1988, S2044, S2054, S2140, S2143, S2194, and S2206. The disordered stretch occupies residues 2039–2064 (EGAHSSSNSRNGRITSNSLETGHPVE). Positions 2041–2058 (AHSSSNSRNGRITSNSLE) are enriched in polar residues. The segment at 2178–2237 (EDNDSALNLVKTPPSGSPSRDQVVGGNVSPREMPEQEAAVDVIPDHTRSNVYNSQDYLNG) is disordered. Residues 2226–2237 (SNVYNSQDYLNG) are compositionally biased toward polar residues.

In terms of assembly, homodimer. Heterodimer of isoform 1 and isoform 2. Isoform 1 and isoform 2 interact with AR. As to expression, isoform 1 and isoform 2 are highly expressed in testis, moderately expressed in adrenal gland and uterus and faintly expressed in brain, kidney and liver. Isoform 1 is expressed more in adrenal gland, uterus and liver than isoform 2 is. Expression during testicular development of isoform 1 and isoform 2 is restricted to spermatocytes at the pachytene stage of meiotic prophase and to round and elongated spermatids.

The protein resides in the nucleus. Its function is as follows. Acts as a transcriptional corepressor for AR-mediated transactivation function. May act as a transcriptional regulator during spermatogenesis and in particular, during meiotic division. In terms of biological role, acts as a transcriptional coactivator for AR-mediated transactivation function. May act as a transcriptional regulator during spermatogenesis and in particular, during meiotic division. The sequence is that of Zinc finger protein 318 (Znf318) from Mus musculus (Mouse).